The sequence spans 472 residues: UDP-N-acetylmuramate--L-alanine ligase (472 aa).

121 to 127 (GTHGKTT) is an ATP binding site.

The protein belongs to the MurCDEF family.

Its subcellular location is the cytoplasm. The enzyme catalyses UDP-N-acetyl-alpha-D-muramate + L-alanine + ATP = UDP-N-acetyl-alpha-D-muramoyl-L-alanine + ADP + phosphate + H(+). Its pathway is cell wall biogenesis; peptidoglycan biosynthesis. Cell wall formation. In Hahella chejuensis (strain KCTC 2396), this protein is UDP-N-acetylmuramate--L-alanine ligase.